The chain runs to 350 residues: Small ribosomal subunit biogenesis GTPase RsgA (350 aa).

Over residues 1–17 the composition is skewed to polar residues; sequence MSKNKLSKGQQRRVNAN. Positions 1–27 are disordered; sequence MSKNKLSKGQQRRVNANHQRRLKTSAE. The 170-residue stretch at 104-273 folds into the CP-type G domain; sequence TSVLTRPDFY…VIDSPGVREF (170 aa). GTP contacts are provided by residues 160–163 and 214–222; these read NKID and GQSGVGKSS. Residues Cys297, Cys302, His304, and Cys310 each coordinate Zn(2+).

The protein belongs to the TRAFAC class YlqF/YawG GTPase family. RsgA subfamily. As to quaternary structure, monomer. Associates with 30S ribosomal subunit, binds 16S rRNA. Zn(2+) serves as cofactor.

Its subcellular location is the cytoplasm. Its function is as follows. One of several proteins that assist in the late maturation steps of the functional core of the 30S ribosomal subunit. Helps release RbfA from mature subunits. May play a role in the assembly of ribosomal proteins into the subunit. Circularly permuted GTPase that catalyzes slow GTP hydrolysis, GTPase activity is stimulated by the 30S ribosomal subunit. This Salmonella typhi protein is Small ribosomal subunit biogenesis GTPase RsgA.